The chain runs to 302 residues: ATP synthase subunit a (302 aa).

7 consecutive transmembrane segments (helical) span residues 61–81 (VDSLAWSGGLGIIMCLLFWLG), 119–139 (IAPLSLVIFCWVFLMNLMDLI), 148–168 (FEWVMVTFFGWSAHEAYFKIV), 172–192 (DPNITLGMSFSVMFLIIFLTI), 214–234 (PVVKALLIPINLLLETIALLA), 252–272 (FVFILLAAMMGTWQFIGAWPW), and 273–293 (AVFHILVITLQAFIFMVLTIV).

Belongs to the ATPase A chain family. F-type ATPases have 2 components, CF(1) - the catalytic core - and CF(0) - the membrane proton channel. CF(1) has five subunits: alpha(3), beta(3), gamma(1), delta(1), epsilon(1). CF(0) has three main subunits: a(1), b(2) and c(9-12). The alpha and beta chains form an alternating ring which encloses part of the gamma chain. CF(1) is attached to CF(0) by a central stalk formed by the gamma and epsilon chains, while a peripheral stalk is formed by the delta and b chains.

The protein resides in the cell inner membrane. Key component of the proton channel; it plays a direct role in the translocation of protons across the membrane. The chain is ATP synthase subunit a from Alcanivorax borkumensis (strain ATCC 700651 / DSM 11573 / NCIMB 13689 / SK2).